We begin with the raw amino-acid sequence, 231 residues long: NADH-ubiquinone oxidoreductase chain 4 (231 aa).

Transmembrane regions (helical) follow at residues Pro1–Ile21, Leu34–Leu54, Ser61–Ile80, Trp84–Leu106, Val118–Leu138, and Leu156–Leu178.

It belongs to the complex I subunit 4 family.

The protein resides in the mitochondrion membrane. It catalyses the reaction a ubiquinone + NADH + 5 H(+)(in) = a ubiquinol + NAD(+) + 4 H(+)(out). Core subunit of the mitochondrial membrane respiratory chain NADH dehydrogenase (Complex I) that is believed to belong to the minimal assembly required for catalysis. Complex I functions in the transfer of electrons from NADH to the respiratory chain. The immediate electron acceptor for the enzyme is believed to be ubiquinone. This chain is NADH-ubiquinone oxidoreductase chain 4 (MT-ND4), found in Azemiops feae (Fea's viper).